Consider the following 409-residue polypeptide: Glutamate--tRNA ligase 2 (409 aa).

Positions 9–19 (PSPTGNLHIGG) match the 'HIGH' region motif. The 'KMSKS' region signature appears at 198 to 202 (KLSKR). K201 contributes to the ATP binding site.

The protein belongs to the class-I aminoacyl-tRNA synthetase family. Glutamate--tRNA ligase type 1 subfamily. As to quaternary structure, monomer.

The protein resides in the cytoplasm. It carries out the reaction tRNA(Glu) + L-glutamate + ATP = L-glutamyl-tRNA(Glu) + AMP + diphosphate. In terms of biological role, catalyzes the attachment of glutamate to tRNA(Glu) in a two-step reaction: glutamate is first activated by ATP to form Glu-AMP and then transferred to the acceptor end of tRNA(Glu). The chain is Glutamate--tRNA ligase 2 from Neorickettsia sennetsu (strain ATCC VR-367 / Miyayama) (Ehrlichia sennetsu).